The following is a 135-amino-acid chain: Probable transporter PD_1892 (135 aa).

Transmembrane regions (helical) follow at residues 4 to 24, 45 to 65, 71 to 91, and 114 to 134; these read YWYP…LLLL, AQNI…TVIF, VTVA…GLGT, and IVAT…MGVY.

It belongs to the TsuA/YedE (TC 9.B.102) family.

It localises to the cell inner membrane. In Xylella fastidiosa (strain Temecula1 / ATCC 700964), this protein is Probable transporter PD_1892.